The chain runs to 142 residues: Required for drug-induced death protein 1 (142 aa).

Disordered regions lie at residues Met-1 to Ala-32 and Glu-46 to Ala-66. Residues Val-116–Val-138 traverse the membrane as a helical segment.

Its subcellular location is the membrane. Regulates drug efflux through modulation of ABCB1 localization and activity. This is Required for drug-induced death protein 1 from Homo sapiens (Human).